Consider the following 775-residue polypeptide: 5-methyltetrahydropteroyltriglutamate--homocysteine methyltransferase (775 aa).

Residues 16–19 and K115 each bind 5-methyltetrahydropteroyltri-L-glutamate; that span reads REMK. Residues 435–437 and E488 contribute to the L-homocysteine site; that span reads IGS. Residues 435–437 and E488 each bind L-methionine; that span reads IGS. Residues 519–520 and W565 each bind 5-methyltetrahydropteroyltri-L-glutamate; that span reads RC. Residue D603 coordinates L-homocysteine. L-methionine is bound at residue D603. E609 lines the 5-methyltetrahydropteroyltri-L-glutamate pocket. Zn(2+)-binding residues include H645, C647, and E669. H698 acts as the Proton donor in catalysis. Zn(2+) is bound at residue C730.

Belongs to the vitamin-B12 independent methionine synthase family. It depends on Zn(2+) as a cofactor.

The enzyme catalyses 5-methyltetrahydropteroyltri-L-glutamate + L-homocysteine = tetrahydropteroyltri-L-glutamate + L-methionine. It functions in the pathway amino-acid biosynthesis; L-methionine biosynthesis via de novo pathway; L-methionine from L-homocysteine (MetE route): step 1/1. In terms of biological role, catalyzes the transfer of a methyl group from 5-methyltetrahydrofolate to homocysteine resulting in methionine formation. In Coxiella burnetii (strain CbuG_Q212) (Coxiella burnetii (strain Q212)), this protein is 5-methyltetrahydropteroyltriglutamate--homocysteine methyltransferase.